The sequence spans 31 residues: Photosystem I reaction center subunit XII (31 aa).

Residues 6 to 25 traverse the membrane as a helical segment; sequence TQILAALVVALLPAFLAFRL.

The protein belongs to the PsaM family.

The protein resides in the cellular thylakoid membrane. The chain is Photosystem I reaction center subunit XII from Synechocystis sp. (strain ATCC 27184 / PCC 6803 / Kazusa).